Consider the following 166-residue polypeptide: MARYEDLPYRSCVGMMLLNPKGLVFIGRRVGGTELIDPAHVWQMPQGGIDPGEDYWEAAQRELLEETNARSIEKLAEATDWFTYDIPRMIAGRSWKGRYRGQRQKWFAIRFTGDDSEINVASPAGHKAEFVDWRWEPMQNLPNLVVPFKRPVYERVVKEFSRFAGE.

The region spanning 8–158 (PYRSCVGMML…KRPVYERVVK (151 aa)) is the Nudix hydrolase domain. A Nudix box motif is present at residues 47–68 (GGIDPGEDYWEAAQRELLEETN).

It belongs to the Nudix hydrolase family. RppH subfamily. Requires a divalent metal cation as cofactor.

Its function is as follows. Accelerates the degradation of transcripts by removing pyrophosphate from the 5'-end of triphosphorylated RNA, leading to a more labile monophosphorylated state that can stimulate subsequent ribonuclease cleavage. The polypeptide is RNA pyrophosphohydrolase (Afipia carboxidovorans (strain ATCC 49405 / DSM 1227 / KCTC 32145 / OM5) (Oligotropha carboxidovorans)).